The chain runs to 313 residues: Acetaldehyde dehydrogenase 2 (313 aa).

12-15 contacts NAD(+); the sequence is SGNI. Cysteine 132 functions as the Acyl-thioester intermediate in the catalytic mechanism. NAD(+) contacts are provided by residues 163–171 and asparagine 287; that span reads SAGPGTRAN.

This sequence belongs to the acetaldehyde dehydrogenase family.

It carries out the reaction acetaldehyde + NAD(+) + CoA = acetyl-CoA + NADH + H(+). The protein is Acetaldehyde dehydrogenase 2 (amnH) of Paraburkholderia xenovorans (strain LB400).